The chain runs to 141 residues: Hemoglobin subunit alpha-D (141 aa).

Residues 1–141 (MLTAEDKKLI…VAAVLAEKYR (141 aa)) enclose the Globin domain. Residues histidine 58 and histidine 87 each coordinate heme b.

Belongs to the globin family. In terms of assembly, heterotetramer of two alpha-D chains and two beta chains. Red blood cells.

Functionally, involved in oxygen transport from the lung to the various peripheral tissues. The sequence is that of Hemoglobin subunit alpha-D (HBAD) from Cairina moschata (Muscovy duck).